Here is a 147-residue protein sequence, read N- to C-terminus: Cytochrome c-type biogenesis protein CcmE 1 (147 aa).

Topologically, residues 1-9 (MKSLKKQRR) are cytoplasmic. A helical; Signal-anchor for type II membrane protein transmembrane segment spans residues 10–30 (IQVIILATVALVLATGLIGYA). The Periplasmic portion of the chain corresponds to 31-147 (MRDGINFFRA…EQGVYQAPES (117 aa)). Heme contacts are provided by histidine 123 and tyrosine 127.

It belongs to the CcmE/CycJ family.

It is found in the cell inner membrane. Heme chaperone required for the biogenesis of c-type cytochromes. Transiently binds heme delivered by CcmC and transfers the heme to apo-cytochromes in a process facilitated by CcmF and CcmH. This chain is Cytochrome c-type biogenesis protein CcmE 1, found in Ruegeria pomeroyi (strain ATCC 700808 / DSM 15171 / DSS-3) (Silicibacter pomeroyi).